The chain runs to 111 residues: Large ribosomal subunit protein P2-2 (111 aa).

The tract at residues 86–111 is disordered; sequence APAAAAAKKDEPEEEADDDMGFGLFD.

The protein belongs to the eukaryotic ribosomal protein P1/P2 family. P1 and P2 exist as dimers at the large ribosomal subunit. In terms of processing, phosphorylated.

Its function is as follows. Plays an important role in the elongation step of protein synthesis. The chain is Large ribosomal subunit protein P2-2 (LIP') from Leishmania infantum.